A 327-amino-acid chain; its full sequence is Complex I intermediate-associated protein 30, mitochondrial (327 aa).

A mitochondrion-targeting transit peptide spans 1-24 (MALVHKLLRGTYFLRKFXKPTSAL). Positions 42–63 (PVASPGKASSQRKTEGDLQGDH) are disordered. The span at 53-63 (RKTEGDLQGDH) shows a compositional bias: basic and acidic residues. Serine 318 carries the post-translational modification Phosphoserine.

Belongs to the CIA30 family. As to quaternary structure, part of the mitochondrial complex I assembly/MCIA complex that comprises at least the core subunits TMEM126B, NDUFAF1, ECSIT and ACAD9 and complement subunits such as COA1 and TMEM186. Interacts with ECSIT. Interacts with ACAD9. At early stages of complex I assembly, it is found in intermediate subcomplexes that contain different subunits including NDUFB6, NDUFA6, NDUFA9, NDUFS3, NDUFS7, ND1, ND2 and ND3. Interacts with TMEM70 and TMEM242.

Its subcellular location is the mitochondrion. The protein localises to the mitochondrion matrix. Functionally, as part of the MCIA complex, involved in the assembly of the mitochondrial complex I. This is Complex I intermediate-associated protein 30, mitochondrial from Pan troglodytes (Chimpanzee).